The following is a 368-amino-acid chain: Chaperone protein DnaJ (368 aa).

Residues 5–65 (DYYEVLGLTK…QKKARYDQFG (61 aa)) form the J domain. A CR-type zinc finger spans residues 125-207 (GKETEIEIPK…CRGEGKVQKR (83 aa)). Residues C138, C141, C155, C158, C181, C184, C195, and C198 each contribute to the Zn(2+) site. 4 CXXCXGXG motif repeats span residues 138-145 (CETCHGSG), 155-162 (CSTCNGAG), 181-188 (CTTCHGTG), and 195-202 (CSTCRGEG).

The protein belongs to the DnaJ family. As to quaternary structure, homodimer. Zn(2+) serves as cofactor.

It is found in the cytoplasm. Participates actively in the response to hyperosmotic and heat shock by preventing the aggregation of stress-denatured proteins and by disaggregating proteins, also in an autonomous, DnaK-independent fashion. Unfolded proteins bind initially to DnaJ; upon interaction with the DnaJ-bound protein, DnaK hydrolyzes its bound ATP, resulting in the formation of a stable complex. GrpE releases ADP from DnaK; ATP binding to DnaK triggers the release of the substrate protein, thus completing the reaction cycle. Several rounds of ATP-dependent interactions between DnaJ, DnaK and GrpE are required for fully efficient folding. Also involved, together with DnaK and GrpE, in the DNA replication of plasmids through activation of initiation proteins. The polypeptide is Chaperone protein DnaJ (Lysinibacillus sphaericus (Bacillus sphaericus)).